We begin with the raw amino-acid sequence, 470 residues long: Calmodulin-binding receptor-like cytoplasmic kinase 1 (470 aa).

Disordered stretches follow at residues 1–29 and 65–128; these read MPMR…SWTD and PTEC…SKSW. Residues 65 to 82 show a composition bias toward basic and acidic residues; the sequence is PTECRSDPGESSTHDRES. Composition is skewed to polar residues over residues 83-98 and 108-121; these read TLSG…SFGR and YRFS…PGKD. In terms of domain architecture, Protein kinase spans 147–423; sequence FSSVHQIGEG…MKGIAEKLWA (277 aa). ATP-binding positions include 153-161 and lysine 175; that span reads IGEGGFGTV. The caM-binding stretch occupies residues 162-185; the sequence is FKGKLDDGTIVAIKRARKNNYGKS. The Proton acceptor role is filled by aspartate 273. 2 positions are modified to phosphoserine: serine 277 and serine 308. Threonine 309 bears the Phosphothreonine mark. Tyrosine 322 carries the phosphotyrosine modification.

Belongs to the protein kinase superfamily. Ser/Thr protein kinase family. In terms of assembly, interacts with calmodulin (CaM) in a Ca(2+)-dependent manner. The cofactor is Mg(2+). Post-translationally, autophosphorylated.

The protein localises to the cytoplasm. The enzyme catalyses L-seryl-[protein] + ATP = O-phospho-L-seryl-[protein] + ADP + H(+). It carries out the reaction L-threonyl-[protein] + ATP = O-phospho-L-threonyl-[protein] + ADP + H(+). With respect to regulation, up-regulated by Ca(2+)/CaM. The chain is Calmodulin-binding receptor-like cytoplasmic kinase 1 (CRCK1) from Arabidopsis thaliana (Mouse-ear cress).